Here is a 46-residue protein sequence, read N- to C-terminus: MRPLQISAETAQKLAESLNLPLEQIMHMPQHILLAKMAELQKEDKS.

This is an uncharacterized protein from Bacillus subtilis (strain 168).